The chain runs to 497 residues: Tyrosine-protein kinase SPK-1 (497 aa).

The tract at residues Met1–Pro25 is disordered. Positions Pro33–Gly94 constitute an SH3 domain. The 101-residue stretch at Glu100 to Met200 folds into the SH2 domain. In terms of domain architecture, Protein kinase spans Ile220–Leu482. ATP contacts are provided by residues Ile226–Val234 and Lys248. Catalysis depends on Asp342, which acts as the Proton acceptor.

It belongs to the protein kinase superfamily. Tyr protein kinase family.

The enzyme catalyses L-tyrosyl-[protein] + ATP = O-phospho-L-tyrosyl-[protein] + ADP + H(+). In Girardia tigrina (Planarian), this protein is Tyrosine-protein kinase SPK-1.